Reading from the N-terminus, the 552-residue chain is MNIKEYDYIIIGAGSAGNVLAARLTEDKDTTVLLLEAGGPDYRLDFRTQMPAALAYPLQGRRYNWAYLTDPEPHMNNRRMECGRGKGLGGSSLINGMCYIRGNAMDLEQWATHKGLENWTYADCLPYYKKAETRDIGGNDYHGDSGPVSVATPKNGNNVLFHAMVEAGVQAGYPRTDDLNGYQQEGFGPMDRTVTPKGRRSSTARGYLDMAKGRPNLTILTHATTNKILFNQKQAIGVEYIIGADQNNLQRALVKREVLLCAGAIASPQILQRSGVGQSTFLKSMDIDVVHDLPGVGENLQDHLEMYLQYKCKQPVSLYPALKWYNQPAIGAEWLFNGTGIGASNQFEAGGFIRSSDEFKWPNIQYHFLPVAINYNGSNAVKEHGFQAHVGSMRSPSRGRIKLKSKDPFAHPSILFNYMSTEQDWREFRDAIRITREIMHQPALDPYRGDEISPGKHLQTDAELDDFVRNHAETAYHPSCSCKMGEDEMAVVDGQGRVHGMNGLRVVDASIMPLIITGNLNATTIMIAEKIADQIRGREALPRSTAPFYVAS.

7–36 (DYIIIGAGSAGNVLAARLTEDKDTTVLLLE) lines the FAD pocket. Catalysis depends on His477, which acts as the Proton acceptor.

The protein belongs to the GMC oxidoreductase family. It depends on FAD as a cofactor.

The enzyme catalyses choline + A = betaine aldehyde + AH2. It carries out the reaction betaine aldehyde + NAD(+) + H2O = glycine betaine + NADH + 2 H(+). Its pathway is amine and polyamine biosynthesis; betaine biosynthesis via choline pathway; betaine aldehyde from choline (cytochrome c reductase route): step 1/1. Its function is as follows. Involved in the biosynthesis of the osmoprotectant glycine betaine. Catalyzes the oxidation of choline to betaine aldehyde and betaine aldehyde to glycine betaine at the same rate. In Acinetobacter baumannii (strain AB307-0294), this protein is Oxygen-dependent choline dehydrogenase.